The sequence spans 247 residues: 2,3-bisphosphoglycerate-dependent phosphoglycerate mutase (247 aa).

Substrate-binding positions include 8–15 (RHGESVWN), 21–22 (TG), R60, 87–90 (ERHY), K98, 114–115 (RR), and 183–184 (GN). The active-site Tele-phosphohistidine intermediate is the H9. E87 serves as the catalytic Proton donor/acceptor.

This sequence belongs to the phosphoglycerate mutase family. BPG-dependent PGAM subfamily. In terms of assembly, homodimer.

It catalyses the reaction (2R)-2-phosphoglycerate = (2R)-3-phosphoglycerate. It participates in carbohydrate degradation; glycolysis; pyruvate from D-glyceraldehyde 3-phosphate: step 3/5. In terms of biological role, catalyzes the interconversion of 2-phosphoglycerate and 3-phosphoglycerate. This is 2,3-bisphosphoglycerate-dependent phosphoglycerate mutase from Geobacter sulfurreducens (strain ATCC 51573 / DSM 12127 / PCA).